Here is a 276-residue protein sequence, read N- to C-terminus: NADPH-dependent 7-cyano-7-deazaguanine reductase (276 aa).

Position 83–85 (83–85) interacts with substrate; it reads IES. 85–86 provides a ligand contact to NADPH; it reads SK. Cys184 (thioimide intermediate) is an active-site residue. The Proton donor role is filled by Asp191. Residue 223 to 224 participates in substrate binding; that stretch reads HE. An NADPH-binding site is contributed by 252-253; the sequence is RG.

It belongs to the GTP cyclohydrolase I family. QueF type 2 subfamily. Homodimer.

The protein localises to the cytoplasm. The catalysed reaction is 7-aminomethyl-7-carbaguanine + 2 NADP(+) = 7-cyano-7-deazaguanine + 2 NADPH + 3 H(+). The protein operates within tRNA modification; tRNA-queuosine biosynthesis. Catalyzes the NADPH-dependent reduction of 7-cyano-7-deazaguanine (preQ0) to 7-aminomethyl-7-deazaguanine (preQ1). The chain is NADPH-dependent 7-cyano-7-deazaguanine reductase from Pseudomonas paraeruginosa (strain DSM 24068 / PA7) (Pseudomonas aeruginosa (strain PA7)).